We begin with the raw amino-acid sequence, 327 residues long: MSENIAVVGSGAFGTALAAVIALAGRSAVTLVGRDPSLIADLKAERLHDAVLPGILLPDTLEFSAEADAITGASIVLFAMPSQAQADAARQYGPYLCKDAVVVTCAKGIERATGNLLTDMLERELPDHSIAVLSGPGFAADIAKGLPTAMAIAAADMETAERLAQAISGRTFRLYASNDRIGVQLGGALKNVLAIACGIVEGRGIGDSARAALIARGLAEMSRFVVAKGGQADTVRGLSGLGDLVLTATSHQSRNLRFGIALGRGEKTDPLQGALVEGAFAASVASRLAAELKVSMPITDAVSAIIDGKLDISEAIEQLMTRPITTE.

Residues Phe13, Arg34, and Lys107 each contribute to the NADPH site. Sn-glycerol 3-phosphate is bound by residues Lys107 and Gly135. Ala139 is a binding site for NADPH. Sn-glycerol 3-phosphate contacts are provided by Lys190, Asp243, Ser253, Arg254, and Asn255. The active-site Proton acceptor is Lys190. Arg254 is a binding site for NADPH. The NADPH site is built by Val276 and Glu277.

The protein belongs to the NAD-dependent glycerol-3-phosphate dehydrogenase family.

The protein resides in the cytoplasm. The catalysed reaction is sn-glycerol 3-phosphate + NAD(+) = dihydroxyacetone phosphate + NADH + H(+). It carries out the reaction sn-glycerol 3-phosphate + NADP(+) = dihydroxyacetone phosphate + NADPH + H(+). The protein operates within membrane lipid metabolism; glycerophospholipid metabolism. Functionally, catalyzes the reduction of the glycolytic intermediate dihydroxyacetone phosphate (DHAP) to sn-glycerol 3-phosphate (G3P), the key precursor for phospholipid synthesis. This is Glycerol-3-phosphate dehydrogenase [NAD(P)+] from Rhizobium johnstonii (strain DSM 114642 / LMG 32736 / 3841) (Rhizobium leguminosarum bv. viciae).